The following is a 218-amino-acid chain: Protein GrpE (218 aa).

The segment covering 1–10 has biased composition (polar residues); sequence MSGEASTPAQ. 2 disordered regions span residues 1-44 and 198-218; these read MSGE…DPAE and SMGPGPSADAEGAASAEAEDS. The segment covering 200-218 has biased composition (low complexity); it reads GPGPSADAEGAASAEAEDS.

This sequence belongs to the GrpE family. Homodimer.

The protein localises to the cytoplasm. Functionally, participates actively in the response to hyperosmotic and heat shock by preventing the aggregation of stress-denatured proteins, in association with DnaK and GrpE. It is the nucleotide exchange factor for DnaK and may function as a thermosensor. Unfolded proteins bind initially to DnaJ; upon interaction with the DnaJ-bound protein, DnaK hydrolyzes its bound ATP, resulting in the formation of a stable complex. GrpE releases ADP from DnaK; ATP binding to DnaK triggers the release of the substrate protein, thus completing the reaction cycle. Several rounds of ATP-dependent interactions between DnaJ, DnaK and GrpE are required for fully efficient folding. This is Protein GrpE from Parasynechococcus marenigrum (strain WH8102).